We begin with the raw amino-acid sequence, 382 residues long: uncharacterized protein (382 aa).

12 helical membrane-spanning segments follow: residues 14–34, 45–65, 79–99, 102–122, 131–151, 157–177, 204–224, 235–255, 270–290, 291–311, 325–345, and 348–368; these read GLLL…LWLA, VVSS…GYVI, FIFA…SWLA, FVAG…LMCS, LLAA…LLVS, LMSV…PLLF, LGVN…GLMP, ASIG…QWPI, VQVF…AMAP, ALFI…AWAC, ALLL…AMLM, and FSDN…LLML.

This sequence belongs to the major facilitator superfamily. YcaD (TC 2.A.1.26) family.

It localises to the cell inner membrane. This is an uncharacterized protein from Escherichia coli O6:K15:H31 (strain 536 / UPEC).